The primary structure comprises 235 residues: Large ribosomal subunit protein uL1 (235 aa).

The protein belongs to the universal ribosomal protein uL1 family. As to quaternary structure, part of the 50S ribosomal subunit.

Binds directly to 23S rRNA. The L1 stalk is quite mobile in the ribosome, and is involved in E site tRNA release. In terms of biological role, protein L1 is also a translational repressor protein, it controls the translation of the L11 operon by binding to its mRNA. This Prochlorococcus marinus (strain AS9601) protein is Large ribosomal subunit protein uL1.